The sequence spans 147 residues: Leghemoglobin (147 aa).

Residues Gly2–Ser147 enclose the Globin domain. Tyr25 and Tyr30 each carry nitrated tyrosine. A heme b-binding site is contributed by Ser45. At Ser45 the chain carries Phosphoserine. His62 is an O2 binding site. The heme b site is built by Lys65, His94, and Lys97. Position 135 is a nitrated tyrosine (Tyr135).

This sequence belongs to the plant globin family. As to quaternary structure, monomer. In terms of processing, nitrated in effective nodules and particularly in hypoxic conditions; this mechanism may play a protective role in the symbiosis by buffering toxic peroxynitrite NO(2)(-). Nitration level decrease during nodule senescence. Post-translationally, phosphorylation at Ser-45 disrupts the molecular environment of its porphyrin ring oxygen binding pocket, thus leading to a reduced oxygen consumption and to the delivery of oxygen O(2) to symbiosomes. Root nodules.

It localises to the cytoplasm. The protein resides in the cytosol. It is found in the nucleus. Its function is as follows. Leghemoglobin that reversibly binds oxygen O(2) through a pentacoordinated heme iron. In root nodules, facilitates the diffusion of oxygen to the bacteroids while preventing the bacterial nitrogenase from being inactivated by buffering dioxygen, nitric oxide and carbon monoxide, and promoting the formation of reactive oxygen species (ROS, e.g. H(2)O(2)). This role is essential for symbiotic nitrogen fixation (SNF). The protein is Leghemoglobin (LB3) of Medicago sativa (Alfalfa).